The chain runs to 439 residues: Xylose isomerase (439 aa).

Active-site residues include His99 and Asp102. 7 residues coordinate Mg(2+): Glu230, Glu266, His269, Asp294, Asp305, Asp307, and Asp337.

Belongs to the xylose isomerase family. As to quaternary structure, homotetramer. Requires Mg(2+) as cofactor.

It localises to the cytoplasm. It catalyses the reaction alpha-D-xylose = alpha-D-xylulofuranose. The protein is Xylose isomerase of Shouchella clausii (strain KSM-K16) (Alkalihalobacillus clausii).